Here is a 457-residue protein sequence, read N- to C-terminus: TnpB-like protein ORF457 (457 aa).

A disordered region spans residues 1–22; sequence MPPSSGQLLGDEEREPTSTPAI.

This sequence in the N-terminal section; belongs to the transposase 2 family. The protein in the C-terminal section; belongs to the transposase 35 family.

The sequence is that of TnpB-like protein ORF457 from Acidianus two-tailed virus (ATV).